Here is a 427-residue protein sequence, read N- to C-terminus: Serine hydroxymethyltransferase (427 aa).

(6S)-5,6,7,8-tetrahydrofolate contacts are provided by residues Leu-122 and 126–128; that span reads GHL. Residue Lys-231 is modified to N6-(pyridoxal phosphate)lysine. (6S)-5,6,7,8-tetrahydrofolate contacts are provided by residues Glu-247 and 355–357; that span reads SPF.

The protein belongs to the SHMT family. Homodimer. It depends on pyridoxal 5'-phosphate as a cofactor.

The protein localises to the cytoplasm. It carries out the reaction (6R)-5,10-methylene-5,6,7,8-tetrahydrofolate + glycine + H2O = (6S)-5,6,7,8-tetrahydrofolate + L-serine. The protein operates within one-carbon metabolism; tetrahydrofolate interconversion. It functions in the pathway amino-acid biosynthesis; glycine biosynthesis; glycine from L-serine: step 1/1. Its function is as follows. Catalyzes the reversible interconversion of serine and glycine with tetrahydrofolate (THF) serving as the one-carbon carrier. This reaction serves as the major source of one-carbon groups required for the biosynthesis of purines, thymidylate, methionine, and other important biomolecules. Also exhibits THF-independent aldolase activity toward beta-hydroxyamino acids, producing glycine and aldehydes, via a retro-aldol mechanism. This is Serine hydroxymethyltransferase from Microcystis aeruginosa (strain NIES-843 / IAM M-2473).